We begin with the raw amino-acid sequence, 324 residues long: N-acetyl-gamma-glutamyl-phosphate reductase (324 aa).

Cys131 is an active-site residue.

Belongs to the NAGSA dehydrogenase family. Type 1 subfamily.

It localises to the cytoplasm. It catalyses the reaction N-acetyl-L-glutamate 5-semialdehyde + phosphate + NADP(+) = N-acetyl-L-glutamyl 5-phosphate + NADPH + H(+). Its pathway is amino-acid biosynthesis; L-arginine biosynthesis; N(2)-acetyl-L-ornithine from L-glutamate: step 3/4. In terms of biological role, catalyzes the NADPH-dependent reduction of N-acetyl-5-glutamyl phosphate to yield N-acetyl-L-glutamate 5-semialdehyde. This Bradyrhizobium sp. (strain BTAi1 / ATCC BAA-1182) protein is N-acetyl-gamma-glutamyl-phosphate reductase.